A 238-amino-acid chain; its full sequence is 3-dehydroquinate dehydratase (238 aa).

3-dehydroquinate is bound by residues 35–37 (ELR) and arginine 68. Histidine 131 (proton donor/acceptor) is an active-site residue. Catalysis depends on lysine 158, which acts as the Schiff-base intermediate with substrate. 3-dehydroquinate-binding residues include arginine 200 and glutamine 223.

Belongs to the type-I 3-dehydroquinase family. As to quaternary structure, homodimer.

It carries out the reaction 3-dehydroquinate = 3-dehydroshikimate + H2O. It participates in metabolic intermediate biosynthesis; chorismate biosynthesis; chorismate from D-erythrose 4-phosphate and phosphoenolpyruvate: step 3/7. Its function is as follows. Involved in the third step of the chorismate pathway, which leads to the biosynthesis of aromatic amino acids. Catalyzes the cis-dehydration of 3-dehydroquinate (DHQ) and introduces the first double bond of the aromatic ring to yield 3-dehydroshikimate. The polypeptide is 3-dehydroquinate dehydratase (Staphylococcus epidermidis (strain ATCC 35984 / DSM 28319 / BCRC 17069 / CCUG 31568 / BM 3577 / RP62A)).